Reading from the N-terminus, the 767-residue chain is MAKRHKHFEGRGRGGSRGRGRGRGGSRGRGRGGSRSRGAGRGGFGRSSNDDNWRNSSIPFGDGDLGNFNFADIDVPRGRRVYYSPDDIEDYYFGKSENMESMKMGGLRPGHKREDTPRSSSFRARPVQFIKAKDVYDPSHDLIIKLRSKNLEQESQDEELSQGDAESAREDFESGTEEEIEEEEEVLPEIEREEVEEEEVEPEEVEEEEVEPEEVDSEDAESEEVDDKDLFFIDEEGYNEDTLPTVPSVSISEDSTVKKPQKTNLEFNDILTVGKVEINLAHDASDDGVFVSNVKKNYHPFSGYISQVMKNIQVSDEDDDEDDYEDEEEDFQSDFSYKYEQQTTSKAISADIEKLSISSENLKNSSDISRDNSPDNNEEQESKDPEFGFLEEDFVINTSEVSVTNIRIGFSENSYFLKCYRLFGHYESKWIDQETFLDLILNDLGLPEHRLNAYLTFIRDSLIPKEEPPEPTYSDIHFSDTSEEESDNDSEIGDDMREGIEDLISYATKLEKDRNFEFETKSLQTVGKGKKKKLLVQEDMQLDGVIASELQDKFSTRLDNKAKKRRTKEDFIDQENEKSDDLFKKYPYGLHVLNIKEEFELFIRRSDKEALVFPPLDPHGNKTITKFAKFYFMKTNKRGRGNQTHIFVQKVKATRYNEPNYNIIDNLTRQRPIFMRHDVSKPRNEYQRTERVKLPKGKFHVKEGEVVGQDAPVIDRNNIGRILLERLGWSEGEGLGIQGNKGISEPVFAVVKKSKTGLRHERKKRIE.

Basic residues predominate over residues methionine 1 to serine 34. 5 disordered regions span residues methionine 1–alanine 71, serine 101–valine 127, arginine 147–lysine 258, lysine 363–phenylalanine 387, and glutamate 466–aspartate 494. Residues arginine 35 to glycine 45 show a composition bias toward gly residues. The span at glutamate 173 to asparagine 239 shows a compositional bias: acidic residues. Polar residues predominate over residues threonine 245–aspartate 254. The span at threonine 481–glycine 493 shows a compositional bias: acidic residues. Positions glycine 589 to lysine 652 constitute an R3H domain. The G-patch domain maps to arginine 716–lysine 763.

Belongs to the SQS1 family.

The protein localises to the cytoplasm. It is found in the nucleus. Functionally, may be involved in splicing. The sequence is that of Protein SQS1 (SQS1) from Vanderwaltozyma polyspora (strain ATCC 22028 / DSM 70294 / BCRC 21397 / CBS 2163 / NBRC 10782 / NRRL Y-8283 / UCD 57-17) (Kluyveromyces polysporus).